Here is a 113-residue protein sequence, read N- to C-terminus: UPF0339 protein MS1092 (113 aa).

2 consecutive repeat copies span residues 11-59 (AKDG…NFEF) and 62-110 (NKNG…IKDI).

The protein belongs to the UPF0339 family. Duplicated subfamily.

The protein is UPF0339 protein MS1092 of Mannheimia succiniciproducens (strain KCTC 0769BP / MBEL55E).